Here is a 1139-residue protein sequence, read N- to C-terminus: Hapless 2 (1139 aa).

The N-terminal stretch at 1-22 (MCRAIAVALIVYLAQHYILAHA) is a signal peptide. Over 23-630 (EVIASGRLEK…TKKCWSKFGR (608 aa)) the chain is Extracellular. Disulfide bonds link C33/C44, C136/C164, C147/C210, C165/C383, C167/C190, C366/C390, and C475/C482. Positions 241 to 272 (APSPTTATTSATPRTNNSSSANSTNSTNSPAP) are enriched in low complexity. The segment at 241-283 (APSPTTATTSATPRTNNSSSANSTNSTNSPAPQFLSPPAPSTR) is disordered. An N-linked (GlcNAc...) asparagine glycan is attached at N497. Residues C515 and C556 are joined by a disulfide bond. O-linked (GlcNAc...) threonine glycosylation occurs at T577. Residues 631–651 (LLGIIGGALVGLGLLAVALKF) traverse the membrane as a helical segment. The Cytoplasmic portion of the chain corresponds to 652-1139 (GWLASLAASC…PVYDWQAPPK (488 aa)). Disordered stretches follow at residues 689–719 (GGGQ…AEVA) and 741–1139 (HGGG…APPK). Residues 753 to 767 (QHADTRHLQDRDSRA) show a composition bias toward basic and acidic residues. A compositionally biased stretch (low complexity) spans 770–789 (GGASIGSSSAGGSSSLSSYS). The span at 829-851 (WDARGRSPRVADEHGSPRQRYDG) shows a compositional bias: basic and acidic residues. Positions 868 to 884 (YDGGSGGGGGGGGGGYG) are enriched in gly residues. The span at 887–904 (APPPQGPPPHPVGAPPPP) shows a compositional bias: pro residues. 2 stretches are compositionally biased toward gly residues: residues 919–943 (PGGG…GVDQ) and 955–965 (RGGGGPGGMRG). The segment covering 978–991 (GPHPHAPPPPPPPQ) has biased composition (pro residues). Residues 1018–1029 (GREEEAGGDRRG) are compositionally biased toward basic and acidic residues. Residues 1040–1049 (GGRGAGGGRG) show a composition bias toward gly residues. Pro residues predominate over residues 1054–1067 (IGSPPPGPLQPPEY). 2 stretches are compositionally biased toward gly residues: residues 1078 to 1096 (GAGG…GGVG) and 1106 to 1118 (GGRG…GRGR).

This sequence belongs to the HAP2/GCS1 family. Monomer. Homotrimer. Membrane contact and insertion (via its extracellular domain) into a lipid membrane probably triggers trimerization. In terms of processing, the protein present at the cell membrane is rapidly degraded after fusion between male (minus) and female (plus) gametes, contrary to the protein present in intracellular pools. This may represent a mechanism to avoid fusion of several male gametes with a single female gamete. N-glycosylated.

It is found in the cell membrane. The protein localises to the cell projection. The protein resides in the cytoplasmic vesicle membrane. Its function is as follows. During fertilization, required on male (minus) gametes for their fusion with female (plus) gametes. Required for membrane fusion, but not for the initial adhesion between gametes. Inserts (via its extracellular domain) into lipid membranes (in vitro). Probably initiates the fusion of gamete cell membranes by inserting its extracellular domain into the cell membrane of a female gamete. The sequence is that of Hapless 2 from Chlamydomonas reinhardtii (Chlamydomonas smithii).